The following is a 318-amino-acid chain: NADH-ubiquinone oxidoreductase chain 1 (318 aa).

Helical transmembrane passes span 2-22, 76-96, 100-120, 146-166, 171-191, 222-242, 253-273, and 294-314; these read PMIN…FLML, ALAL…IPLI, LGLL…LWSG, LALI…SALI, HSWL…STLA, LFFM…TMIF, ELYT…FLWI, and LPLT…TSGI.

The protein belongs to the complex I subunit 1 family. Core subunit of respiratory chain NADH dehydrogenase (Complex I) which is composed of 45 different subunits.

The protein localises to the mitochondrion inner membrane. It catalyses the reaction a ubiquinone + NADH + 5 H(+)(in) = a ubiquinol + NAD(+) + 4 H(+)(out). Functionally, core subunit of the mitochondrial membrane respiratory chain NADH dehydrogenase (Complex I) which catalyzes electron transfer from NADH through the respiratory chain, using ubiquinone as an electron acceptor. Essential for the catalytic activity and assembly of complex I. In Pongo abelii (Sumatran orangutan), this protein is NADH-ubiquinone oxidoreductase chain 1 (MT-ND1).